The sequence spans 620 residues: Chaperone protein DnaK (620 aa).

Positions 579–620 (KAQKEASAGAEASEDASGPSSTGSASDDDVVDADYEVVDEDK) are disordered. Residues 583–603 (EASAGAEASEDASGPSSTGSA) are compositionally biased toward low complexity. Positions 604 to 620 (SDDDVVDADYEVVDEDK) are enriched in acidic residues.

It belongs to the heat shock protein 70 family.

Acts as a chaperone. The sequence is that of Chaperone protein DnaK from Methanococcoides burtonii (strain DSM 6242 / NBRC 107633 / OCM 468 / ACE-M).